We begin with the raw amino-acid sequence, 181 residues long: Transcription termination/antitermination protein NusG (181 aa).

Positions 130–161 constitute a KOW domain; sequence PGEMVRVNDGPFADFNGVVEEVDYEKSRLKVS.

Belongs to the NusG family. Monomer. Interacts with the transcription termination factor Rho and with RNA polymerase.

Participates in transcription elongation, termination and antitermination. In the absence of Rho, increases the rate of transcription elongation by the RNA polymerase (RNAP), probably by partially suppressing pausing. In the presence of Rho, modulates most Rho-dependent termination events by interacting with the RNAP to render the complex more susceptible to the termination activity of Rho. May be required to overcome a kinetic limitation of Rho to function at certain terminators. Also involved in ribosomal RNA transcriptional antitermination. This chain is Transcription termination/antitermination protein NusG, found in Shigella flexneri.